A 282-amino-acid chain; its full sequence is Leucine-rich protein (282 aa).

Its function is as follows. Not essential for viability or growth. Nevertheless, uncontrolled production in E.coli is detrimental to the normal physiology of the bacteria. In Streptococcus dysgalactiae subsp. equisimilis (Streptococcus equisimilis), this protein is Leucine-rich protein (lrp).